The chain runs to 187 residues: Ribosome-recycling factor (187 aa).

It belongs to the RRF family.

The protein localises to the cytoplasm. Its function is as follows. Responsible for the release of ribosomes from messenger RNA at the termination of protein biosynthesis. May increase the efficiency of translation by recycling ribosomes from one round of translation to another. This is Ribosome-recycling factor from Nitrobacter winogradskyi (strain ATCC 25391 / DSM 10237 / CIP 104748 / NCIMB 11846 / Nb-255).